The chain runs to 269 residues: Mitochondrial S-adenosylmethionine carrier protein (269 aa).

3 Solcar repeats span residues 4 to 77 (REFC…AKQL), 85 to 167 (LSPI…LKDL), and 176 to 264 (VDSW…VRTL). 6 helical membrane passes run 5 to 25 (EFCA…LILF), 49 to 69 (IYAG…AFFV), 84 to 104 (YLSP…ACLI), 141 to 161 (RGYK…FPLW), 181 to 201 (SAVC…PLDV), and 237 to 257 (FAGV…FLGA).

Belongs to the mitochondrial carrier (TC 2.A.29) family.

The protein resides in the mitochondrion inner membrane. It carries out the reaction S-adenosyl-L-homocysteine(out) + S-adenosyl-L-methionine(in) = S-adenosyl-L-homocysteine(in) + S-adenosyl-L-methionine(out). In terms of biological role, mitochondrial S-adenosyl-L-methionine/S-adenosyl-L-homocysteine antiporter. Mediates the exchange of cytosolic S-adenosyl-L-methionine, the predominant methyl-group donor for macromolecule methylation processes, for mitochondrial S-adenosylhomocysteine(SAH), a by-product of methylation reactions. This chain is Mitochondrial S-adenosylmethionine carrier protein (slc25a26), found in Xenopus tropicalis (Western clawed frog).